A 790-amino-acid polypeptide reads, in one-letter code: DNA ligase 1 (790 aa).

Residues 1–64 constitute a mitochondrion transit peptide; that stretch reads MLAIRSSNYL…AFDALMSNAR (64 aa). The segment at 64 to 142 is disordered; sequence RAAAKKKTPQ…TGAKKAKTLS (79 aa). Residues 68–75 carry the Nuclear localization signal 1 motif; sequence KKKTPQTT. The segment covering 116–128 has biased composition (polar residues); sequence DSANPRSDTSSIA. The tract at residues 337-346 is interaction with target DNA; sequence KLRLGFSGQT. Glu-442 is an ATP binding site. Catalysis depends on Lys-444, which acts as the N6-AMP-lysine intermediate. 2 residues coordinate ATP: Arg-449 and Arg-465. Mg(2+) is bound at residue Glu-497. The short motif at 505–512 is the Nuclear localization signal 2 element; sequence KKKILPFQ. The tract at residues 518–520 is interaction with target DNA; that stretch reads ARK. Glu-596 is a binding site for Mg(2+). Residues Lys-601, Arg-614, and Lys-620 each contribute to the ATP site. A disordered region spans residues 757–790; sequence DKKPEEATSSEQIADLYQAQKHNHPSNEVKGDDD. Residues 781–790 are compositionally biased toward basic and acidic residues; that stretch reads PSNEVKGDDD.

Belongs to the ATP-dependent DNA ligase family. Mg(2+) is required as a cofactor. Expressed in all vegetative and reproductive tissues.

Its subcellular location is the mitochondrion. The protein resides in the nucleus. The enzyme catalyses ATP + (deoxyribonucleotide)n-3'-hydroxyl + 5'-phospho-(deoxyribonucleotide)m = (deoxyribonucleotide)n+m + AMP + diphosphate.. Functionally, essential protein. DNA ligase that seals nicks in double-stranded DNA during DNA replication, DNA recombination and DNA repair. Involved in repair of both single strand breaks (SSBs) and double strand breaks (DSBs). Required in the endosperm for embryogenesis, probably to repair DNA-breaks generated by DME. This Arabidopsis thaliana (Mouse-ear cress) protein is DNA ligase 1 (LIG1).